Reading from the N-terminus, the 184-residue chain is Threonylcarbamoyl-AMP synthase (184 aa).

The region spanning 1–184 is the YrdC-like domain; that stretch reads MNNLLAVIEL…IFTQHIFRQG (184 aa).

It belongs to the SUA5 family. TsaC subfamily.

The protein resides in the cytoplasm. The enzyme catalyses L-threonine + hydrogencarbonate + ATP = L-threonylcarbamoyladenylate + diphosphate + H2O. In terms of biological role, required for the formation of a threonylcarbamoyl group on adenosine at position 37 (t(6)A37) in tRNAs that read codons beginning with adenine. Catalyzes the conversion of L-threonine, HCO(3)(-)/CO(2) and ATP to give threonylcarbamoyl-AMP (TC-AMP) as the acyladenylate intermediate, with the release of diphosphate. The protein is Threonylcarbamoyl-AMP synthase of Haemophilus ducreyi (strain 35000HP / ATCC 700724).